The sequence spans 236 residues: Putative lipoprotein MlpA (236 aa).

The first 21 residues, 1 to 21 (MTKNIVNTALVLVGAGSLLTG), serve as a signal peptide directing secretion. Residue cysteine 22 is the site of N-palmitoyl cysteine attachment. Cysteine 22 is lipidated: S-diacylglycerol cysteine.

The protein localises to the cell membrane. This is Putative lipoprotein MlpA (mlpA) from Myxococcus xanthus.